Reading from the N-terminus, the 502-residue chain is Cytochrome P450 monooxygenase orf6 (502 aa).

The chain crosses the membrane as a helical span at residues 3–25; it reads ALWVLAVALVAYFLCLSIYRLFL. Asparagine 382 is a glycosylation site (N-linked (GlcNAc...) asparagine). Position 445 (cysteine 445) interacts with heme.

The protein belongs to the cytochrome P450 family. Heme serves as cofactor.

The protein resides in the membrane. It functions in the pathway mycotoxin biosynthesis. Its function is as follows. Cytochrome P450 monooxygenase; part of the gene cluster that mediates the biosynthesis of brefeldin A (BFA), a protein transport inhibitor that shows antiviral, antifungal, and antitumor properties. The proposed biosynthesis of BFA involves formation of an acyclic polyketide chain that is differentially tailored throughout the backbone. The highly reducing polyketide synthase Bref-PKS is proposed to synthesize the precisely reduced octaketide precursor, which could then be directly offloaded by the thiohydrolase enzyme Bref-TH followed by a cytochrome P450 monooxygenase-mediated formation of the cyclopentane ring and macrocyclization to afford 7-deoxy BFA. Alternatively, the first ring annulation can also occur on the ACP-tethered intermediate before the thiohydrolase release and lactonization. The C7-hydroxylation by another cytochrome P450 monooxygenase is believed to be the final step in the process to obtain the final structure of BFA. In addition to the HRPKS Bref-PKS and the thiohydrolase Bref-TH, the brefeldin A biosynthesis cluster contains 4 cytochrome p450 monooxygenases (called orf3 to orf6), as well a the probable cluster-specific transcription regulator orf8. The chain is Cytochrome P450 monooxygenase orf6 from Eupenicillium brefeldianum (Penicillium brefeldianum).